The chain runs to 396 residues: Elongation factor Tu (396 aa).

The region spanning 10–206 (KPHVNVGTIG…ALDTYIPTPE (197 aa)) is the tr-type G domain. Positions 19 to 26 (GHVDHGKT) are G1. GTP is bound at residue 19–26 (GHVDHGKT). Threonine 26 contributes to the Mg(2+) binding site. Residues 60–64 (GITIN) form a G2 region. The G3 stretch occupies residues 81–84 (DCPG). Residues 81 to 85 (DCPGH) and 136 to 139 (NKAD) contribute to the GTP site. Residues 136–139 (NKAD) are G4. The tract at residues 174-176 (SAK) is G5.

This sequence belongs to the TRAFAC class translation factor GTPase superfamily. Classic translation factor GTPase family. EF-Tu/EF-1A subfamily. In terms of assembly, monomer.

The protein resides in the cytoplasm. The catalysed reaction is GTP + H2O = GDP + phosphate + H(+). Functionally, GTP hydrolase that promotes the GTP-dependent binding of aminoacyl-tRNA to the A-site of ribosomes during protein biosynthesis. The sequence is that of Elongation factor Tu from Janthinobacterium sp. (strain Marseille) (Minibacterium massiliensis).